The chain runs to 1245 residues: ATP-dependent helicase/nuclease subunit A (1245 aa).

The 474-residue stretch at 4–477 (TKWTDEQLSA…IQLYKNFRSR (474 aa)) folds into the UvrD-like helicase ATP-binding domain. 25 to 32 (AAAGSGKT) lines the ATP pocket. The UvrD-like helicase C-terminal domain maps to 517–815 (KFKDTIVGGP…RIMSIHKSKG (299 aa)).

Belongs to the helicase family. AddA subfamily. As to quaternary structure, heterodimer of AddA and AddB/RexB. Mg(2+) serves as cofactor.

It catalyses the reaction Couples ATP hydrolysis with the unwinding of duplex DNA by translocating in the 3'-5' direction.. The enzyme catalyses ATP + H2O = ADP + phosphate + H(+). In terms of biological role, the heterodimer acts as both an ATP-dependent DNA helicase and an ATP-dependent, dual-direction single-stranded exonuclease. Recognizes the chi site generating a DNA molecule suitable for the initiation of homologous recombination. The AddA nuclease domain is required for chi fragment generation; this subunit has the helicase and 3' -&gt; 5' nuclease activities. In Clostridium beijerinckii (strain ATCC 51743 / NCIMB 8052) (Clostridium acetobutylicum), this protein is ATP-dependent helicase/nuclease subunit A.